The sequence spans 127 residues: Fluoride-specific ion channel FluC 2 (127 aa).

The next 4 membrane-spanning stretches (helical) occupy residues 4–24, 31–51, 62–82, and 94–114; these read IIAI…LSLL, FWIT…ITNL, IVIG…TFTF, and VLAL…GLAG. The Na(+) site is built by G72 and T75.

It belongs to the fluoride channel Fluc/FEX (TC 1.A.43) family.

Its subcellular location is the cell membrane. It carries out the reaction fluoride(in) = fluoride(out). Its activity is regulated as follows. Na(+) is not transported, but it plays an essential structural role and its presence is essential for fluoride channel function. Its function is as follows. Fluoride-specific ion channel. Important for reducing fluoride concentration in the cell, thus reducing its toxicity. This is Fluoride-specific ion channel FluC 2 from Lactiplantibacillus plantarum (strain ATCC BAA-793 / NCIMB 8826 / WCFS1) (Lactobacillus plantarum).